The sequence spans 310 residues: MRVIFMGTPDFSVGTLEAIIEAGHEVALVVTQPDKPKGRGKTMQYTPVKECALSHGIEVFQPVKIRETANIEYLRKFNADIIIVVAFGQILSKSILDMPRYGCINVHASLLPKYRGAAPIQWAVINGDEFTGVTTMRMDEGVDTGDMIAKSTVRLAPDETGGSLFDKLSAEGAKLCVETMKMIEDGTAEYTPQNSEEATHTSMISKELGFIDWTKPAVEIERLIRGLNPWPSAYTHLNGKTFKVWSAKVIDGSDDYEPGCIYHIGKNDMYVQTGKGALSLVEVQLQGKKRMDTGSFLRGCHVEEGSFFTL.

Residue 109-112 (SLLP) participates in (6S)-5,6,7,8-tetrahydrofolate binding.

This sequence belongs to the Fmt family.

It catalyses the reaction L-methionyl-tRNA(fMet) + (6R)-10-formyltetrahydrofolate = N-formyl-L-methionyl-tRNA(fMet) + (6S)-5,6,7,8-tetrahydrofolate + H(+). In terms of biological role, attaches a formyl group to the free amino group of methionyl-tRNA(fMet). The formyl group appears to play a dual role in the initiator identity of N-formylmethionyl-tRNA by promoting its recognition by IF2 and preventing the misappropriation of this tRNA by the elongation apparatus. This chain is Methionyl-tRNA formyltransferase, found in Agathobacter rectalis (strain ATCC 33656 / DSM 3377 / JCM 17463 / KCTC 5835 / VPI 0990) (Eubacterium rectale).